We begin with the raw amino-acid sequence, 243 residues long: Transcription factor TFIIS homolog (243 aa).

In terms of domain architecture, TFIIS central spans 77–201 (MRDIIQMMFF…SQQKVAEKTS (125 aa)). The segment at 202–242 (QLYKCPNCKQRMCTYREVQTRALDEPSTIYCTCKKCGHEFI) adopts a TFIIS-type zinc-finger fold. Positions 206, 209, 234, and 237 each coordinate Zn(2+).

The protein belongs to the TFS-II family.

Its function is as follows. Putative initiation factor. Necessary for efficient transcription elongation past template-encoded arresting sites. The polypeptide is Transcription factor TFIIS homolog (African swine fever virus (isolate Pig/Kenya/KEN-50/1950) (ASFV)).